A 274-amino-acid polypeptide reads, in one-letter code: Pyrroline-5-carboxylate reductase 3 (274 aa).

At A2 the chain carries N-acetylalanine.

This sequence belongs to the pyrroline-5-carboxylate reductase family. Homodecamer; composed of 5 homodimers.

The protein localises to the cytoplasm. The enzyme catalyses L-proline + NADP(+) = (S)-1-pyrroline-5-carboxylate + NADPH + 2 H(+). It carries out the reaction L-proline + NAD(+) = (S)-1-pyrroline-5-carboxylate + NADH + 2 H(+). Its pathway is amino-acid biosynthesis; L-proline biosynthesis; L-proline from L-glutamate 5-semialdehyde: step 1/1. Its function is as follows. Oxidoreductase that catalyzes the last step in proline biosynthesis, which corresponds to the reduction of pyrroline-5-carboxylate (P5C) to L-proline using NAD(P)H. Proline is synthesized from either glutamate or ornithine; both are converted to P5C, and then to proline via pyrroline-5-carboxylate reductases (PYCRs). PYCR3 is exclusively linked to the biosynthesis of proline from ornithine. This is Pyrroline-5-carboxylate reductase 3 from Macaca fascicularis (Crab-eating macaque).